Here is a 62-residue protein sequence, read N- to C-terminus: Photosystem II reaction center protein Z (62 aa).

2 consecutive transmembrane segments (helical) span residues 8 to 28 (ALIG…VAYA) and 41 to 61 (WVGS…NFFV).

The protein belongs to the PsbZ family. As to quaternary structure, PSII is composed of 1 copy each of membrane proteins PsbA, PsbB, PsbC, PsbD, PsbE, PsbF, PsbH, PsbI, PsbJ, PsbK, PsbL, PsbM, PsbT, PsbX, PsbY, PsbZ, Psb30/Ycf12, peripheral proteins PsbO, CyanoQ (PsbQ), PsbU, PsbV and a large number of cofactors. It forms dimeric complexes.

The protein localises to the cellular thylakoid membrane. May control the interaction of photosystem II (PSII) cores with the light-harvesting antenna, regulates electron flow through the 2 photosystem reaction centers. PSII is a light-driven water plastoquinone oxidoreductase, using light energy to abstract electrons from H(2)O, generating a proton gradient subsequently used for ATP formation. The protein is Photosystem II reaction center protein Z of Nostoc punctiforme (strain ATCC 29133 / PCC 73102).